Consider the following 710-residue polypeptide: MSKQTFTTTFAGKPLVVEVGQVAKQANGATVVRYGDSTVLTATVMSKKMATGDFFPLQVNYEEKMYAAGKFPGGFMKREGRPSTDATLTARLIDRPIRPMFAEGFRNEVQVINTVLSYDENASAPMAAMFGSSLALSISDIPFNGPIAGVQVGYIDGEFIINPDKEQMEASLLELTVAGSKEAINMVESGAKELSEDIMLEALLKGHQAIQELIAFQEQIVAVVGKEKAEVELLQVDADLQADIVAKYNAQLQKAVQVEEKKAREAATEAVKEMVKAEYEERYAEDENLATIMRDVAEILEQMEHAEVRRLITEDKIRPDGRKIDEIRPLDAVVDFLPKVHGSGLFTRGQTQALSVLTLAPMGETQIIDGLAPEYKKRFLHHYNFPQYSVGETGRYGAAGRREIGHGALGERALEQVLPSLEEFPYAIRLVAEVLESNGSSSQASICAGTLALMAGGVPIKAPVAGIAMGLISDGTNYTVLTDIQGLEDHFGDMDFKVAGTREGITALQMDIKIAGITPQILEEALAQAKKARFEILDVIEATIAEPRPELAPTAPKIDTIKIDVDKIKVVIGKGGETIDKIIAETGVKIDIDDEGNVSIYSSDQAAIDRTKEIIAGLVREAKVGEVYHAKVIRIEKFGAFVNLFDKTDALVHISEIAWTRTANVSDVLEVGEDVDVKVIKIDEKGRVDASMKALIPRPPKQEKKEEKHD.

Mg(2+) contacts are provided by Asp-489 and Asp-495. The KH domain occupies 556–615; sequence PKIDTIKIDVDKIKVVIGKGGETIDKIIAETGVKIDIDDEGNVSIYSSDQAAIDRTKEII. An S1 motif domain is found at 625-693; sequence GEVYHAKVIR…EKGRVDASMK (69 aa).

This sequence belongs to the polyribonucleotide nucleotidyltransferase family. It depends on Mg(2+) as a cofactor.

It localises to the cytoplasm. It carries out the reaction RNA(n+1) + phosphate = RNA(n) + a ribonucleoside 5'-diphosphate. Involved in mRNA degradation. Catalyzes the phosphorolysis of single-stranded polyribonucleotides processively in the 3'- to 5'-direction. The protein is Polyribonucleotide nucleotidyltransferase of Streptococcus pyogenes serotype M3 (strain ATCC BAA-595 / MGAS315).